The chain runs to 398 residues: tRNA pseudouridine synthase D (398 aa).

The Nucleophile role is filled by Asp76. In terms of domain architecture, TRUD spans 151 to 360; it reads GVPNFFGEQR…MPGERRPLRI (210 aa).

This sequence belongs to the pseudouridine synthase TruD family.

The enzyme catalyses uridine(13) in tRNA = pseudouridine(13) in tRNA. Responsible for synthesis of pseudouridine from uracil-13 in transfer RNAs. The protein is tRNA pseudouridine synthase D of Syntrophotalea carbinolica (strain DSM 2380 / NBRC 103641 / GraBd1) (Pelobacter carbinolicus).